The following is a 225-amino-acid chain: Germin-like protein 8-3 (225 aa).

The N-terminal stretch at 1-23 (MASSSLFLLASLLVLASWQQAIA) is a signal peptide. Residues C33 and C48 are joined by a disulfide bond. 2 N-linked (GlcNAc...) asparagine glycosylation sites follow: N53 and N78. The Cupin type-1 domain occupies 60 to 213 (FNAAKFDMPR…AFQVEKKVID (154 aa)). Residues H111, H113, E118, and H158 each coordinate Mn(2+).

The protein belongs to the germin family. As to quaternary structure, oligomer (believed to be a pentamer but probably hexamer).

The protein localises to the secreted. Its subcellular location is the extracellular space. The protein resides in the apoplast. Functionally, plays a role in broad-spectrum disease resistance. Probably has no oxalate oxidase activity even if the active site is conserved. The protein is Germin-like protein 8-3 (GER2) of Oryza sativa subsp. japonica (Rice).